The chain runs to 350 residues: Biotin synthase (350 aa).

The region spanning 38–256 (NHVQVSTLLS…IAIARIMMPQ (219 aa)) is the Radical SAM core domain. [4Fe-4S] cluster is bound by residues Cys-53, Cys-57, and Cys-60. [2Fe-2S] cluster contacts are provided by Cys-97, Cys-128, Cys-188, and Arg-260.

Belongs to the radical SAM superfamily. Biotin synthase family. In terms of assembly, homodimer. The cofactor is [4Fe-4S] cluster. It depends on [2Fe-2S] cluster as a cofactor.

The catalysed reaction is (4R,5S)-dethiobiotin + (sulfur carrier)-SH + 2 reduced [2Fe-2S]-[ferredoxin] + 2 S-adenosyl-L-methionine = (sulfur carrier)-H + biotin + 2 5'-deoxyadenosine + 2 L-methionine + 2 oxidized [2Fe-2S]-[ferredoxin]. Its pathway is cofactor biosynthesis; biotin biosynthesis; biotin from 7,8-diaminononanoate: step 2/2. Functionally, catalyzes the conversion of dethiobiotin (DTB) to biotin by the insertion of a sulfur atom into dethiobiotin via a radical-based mechanism. This is Biotin synthase from Vibrio parahaemolyticus serotype O3:K6 (strain RIMD 2210633).